The chain runs to 74 residues: Putative sulfur carrier protein NMA0882 (74 aa).

The active-site Cysteine persulfide intermediate is cysteine 13.

Belongs to the sulfur carrier protein TusA family.

The protein is Putative sulfur carrier protein NMA0882 of Neisseria meningitidis serogroup A / serotype 4A (strain DSM 15465 / Z2491).